The following is a 147-amino-acid chain: Transcriptional repressor NrdR (147 aa).

A zinc finger lies at 3 to 34; it reads CPYCGNVETTVVETRESDEGDAVRRRRRCSAC. Positions 49–139 constitute an ATP-cone domain; it reads PAVVKKNGDR…VYREFEDIDA (91 aa).

It belongs to the NrdR family. Zn(2+) serves as cofactor.

Its function is as follows. Negatively regulates transcription of bacterial ribonucleotide reductase nrd genes and operons by binding to NrdR-boxes. The sequence is that of Transcriptional repressor NrdR from Leptothrix cholodnii (strain ATCC 51168 / LMG 8142 / SP-6) (Leptothrix discophora (strain SP-6)).